Consider the following 476-residue polypeptide: MTVETFNPKQTTTLETPAKTLEAASADSTATGNRIGFVSLGCPKNLVDSERILTQLRIDGYEVTNSYDNADLVIVNTCGFIDAAVEESLDAVREALEENGKVIVTGCLGAKENQIREVHPDVLEITGPHSYEAVLKHVHKYVPKPEHNPFTSLIPQTGVKLTPKHYAYLKISEGCDNRCTFCIIPALRGDLDSRPAGSVLDEAKRLVESGVQEILVVSQDTSAYGKDKGGRTDFWNGMPVKQDITSLARQLGKMGAWVRLHYIYPYPWVDDLIPLMAEGLILPYLDIPMQHASPRILKMMKRPGRVDRQLEAIQRWREICPDLVIRSTFIVGFPGETEEDFEMLLDFLREARLDRVGCFKYSEVEGAVANTIAELISEDVKEDRYHRFMEVQAEISAERLARFVGRTMDILIDDVDEEGAIGRSFADAPEIDGMVFINGETELEPGMLVRAVITHSDEHDLWAELVDADAEDDIEA.

Residues 33 to 143 (NRIGFVSLGC…VLKHVHKYVP (111 aa)) enclose the MTTase N-terminal domain. 6 residues coordinate [4Fe-4S] cluster: C42, C78, C107, C175, C179, and C182. The region spanning 161–398 (LTPKHYAYLK…MEVQAEISAE (238 aa)) is the Radical SAM core domain. Positions 401 to 467 (ARFVGRTMDI…EHDLWAELVD (67 aa)) constitute a TRAM domain.

This sequence belongs to the methylthiotransferase family. RimO subfamily. [4Fe-4S] cluster serves as cofactor.

The protein resides in the cytoplasm. The catalysed reaction is L-aspartate(89)-[ribosomal protein uS12]-hydrogen + (sulfur carrier)-SH + AH2 + 2 S-adenosyl-L-methionine = 3-methylsulfanyl-L-aspartate(89)-[ribosomal protein uS12]-hydrogen + (sulfur carrier)-H + 5'-deoxyadenosine + L-methionine + A + S-adenosyl-L-homocysteine + 2 H(+). Functionally, catalyzes the methylthiolation of an aspartic acid residue of ribosomal protein uS12. The chain is Ribosomal protein uS12 methylthiotransferase RimO from Shewanella sp. (strain MR-4).